Here is a 434-residue protein sequence, read N- to C-terminus: 3-phosphoshikimate 1-carboxyvinyltransferase (434 aa).

Positions 22, 23, and 27 each coordinate 3-phosphoshikimate. Lys22 is a binding site for phosphoenolpyruvate. Phosphoenolpyruvate-binding residues include Gly94 and Arg122. Ser167, Gln169, Asp314, and Lys341 together coordinate 3-phosphoshikimate. Phosphoenolpyruvate is bound at residue Gln169. Asp314 functions as the Proton acceptor in the catalytic mechanism. Phosphoenolpyruvate-binding residues include Arg345 and Arg391.

The protein belongs to the EPSP synthase family. As to quaternary structure, monomer.

It localises to the cytoplasm. The catalysed reaction is 3-phosphoshikimate + phosphoenolpyruvate = 5-O-(1-carboxyvinyl)-3-phosphoshikimate + phosphate. Its pathway is metabolic intermediate biosynthesis; chorismate biosynthesis; chorismate from D-erythrose 4-phosphate and phosphoenolpyruvate: step 6/7. In terms of biological role, catalyzes the transfer of the enolpyruvyl moiety of phosphoenolpyruvate (PEP) to the 5-hydroxyl of shikimate-3-phosphate (S3P) to produce enolpyruvyl shikimate-3-phosphate and inorganic phosphate. This Leuconostoc mesenteroides subsp. mesenteroides (strain ATCC 8293 / DSM 20343 / BCRC 11652 / CCM 1803 / JCM 6124 / NCDO 523 / NBRC 100496 / NCIMB 8023 / NCTC 12954 / NRRL B-1118 / 37Y) protein is 3-phosphoshikimate 1-carboxyvinyltransferase.